Reading from the N-terminus, the 577-residue chain is Moesin (577 aa).

An FERM domain is found at 2-295 (PKTISVRVTT…GNHELYMRRR (294 aa)). At Ser74 the chain carries Phosphoserine. Lys79 carries the N6-acetyllysine modification. Residue Lys83 is modified to N6-succinyllysine. The [IL]-x-C-x-x-[DE] motif motif lies at 115–120 (IYCPPE). Tyr116 is modified (phosphotyrosine). The residue at position 117 (Cys117) is an S-nitrosocysteine. N6-acetyllysine occurs at positions 139 and 165. 3 disordered regions span residues 322-342 (LLEN…KIER), 358-453 (TKKA…QMVQ), and 468-549 (STPH…AENM). The span at 358 to 401 (TKKAQQELEEQTRRALELEQERKRAQSEAEKLAKERQEAEEAKE) shows a compositional bias: basic and acidic residues. Position 407 is a phosphoserine (Ser407). Basic and acidic residues-rich tracts occupy residues 438–447 (KESEAEECHQ) and 492–519 (AELR…ERVQ). A Phosphoserine modification is found at Ser527. The segment covering 531-549 (NARDESKKTTNDMIHAENM) has biased composition (basic and acidic residues). A Phosphothreonine; by ROCK2 and STK10 modification is found at Thr558.

As to quaternary structure, in resting T-cells, part of a PAG1-NHERF1-MSN complex which is disrupted upon TCR activation. Interacts with NHERF1. Interacts with PPP1R16B. Interacts with PDZD8. Interacts with SELPLG and SYK; these interactions mediate the activation of SYK by SELPLG. Interacts with PDPN (via cytoplasmic domain); this interaction activates RHOA and promotes epithelial-mesenchymal transition. Interacts with SPN/CD43 cytoplasmic tail. Interacts with CD44. Interacts with ICAM2. Interacts with ICAM3 (via C-terminus). Interacts with PDZD8. Interacts with F-actin. Interacts with CD46. Interacts with PTPN6. In terms of processing, phosphorylation on Thr-558 is crucial for the formation of microvilli-like structures. Phosphorylation by ROCK2 suppresses the head-to-tail association of the N-terminal and C-terminal halves resulting in an opened conformation which is capable of actin and membrane-binding. Phosphorylation on Thr-558 by STK10 negatively regulates lymphocyte migration and polarization. S-nitrosylation of Cys-117 is induced by interferon-gamma and oxidatively-modified low-densitity lipoprotein (LDL(ox)) implicating the iNOS-S100A8/9 transnitrosylase complex.

The protein resides in the cell membrane. Its subcellular location is the cytoplasm. It localises to the cytoskeleton. The protein localises to the apical cell membrane. It is found in the cell projection. The protein resides in the microvillus membrane. Its subcellular location is the microvillus. A head-to-tail association, of the N-terminal and C-terminal halves results in a closed conformation (inactive form) which is incapable of actin or membrane-binding. Ezrin-radixin-moesin (ERM) family protein that connects the actin cytoskeleton to the plasma membrane and thereby regulates the structure and function of specific domains of the cell cortex. Tethers actin filaments by oscillating between a resting and an activated state providing transient interactions between moesin and the actin cytoskeleton. Once phosphorylated on its C-terminal threonine, moesin is activated leading to interaction with F-actin and cytoskeletal rearrangement. These rearrangements regulate many cellular processes, including cell shape determination, membrane transport, and signal transduction. The role of moesin is particularly important in immunity acting on both T and B-cells homeostasis and self-tolerance, regulating lymphocyte egress from lymphoid organs. Modulates phagolysosomal biogenesis in macrophages. Participates also in immunologic synapse formation. This is Moesin from Rattus norvegicus (Rat).